The chain runs to 223 residues: Cytidylate kinase (223 aa).

17-25 is a binding site for ATP; it reads GPTASGKGT.

This sequence belongs to the cytidylate kinase family. Type 1 subfamily.

Its subcellular location is the cytoplasm. The enzyme catalyses CMP + ATP = CDP + ADP. It catalyses the reaction dCMP + ATP = dCDP + ADP. In Bordetella bronchiseptica (strain ATCC BAA-588 / NCTC 13252 / RB50) (Alcaligenes bronchisepticus), this protein is Cytidylate kinase.